A 305-amino-acid polypeptide reads, in one-letter code: MGRAPCCDKMAVKKGPWSTEEDAVLKSYIEKHGTGNNWISLPQRIGIKRCGKSCRLRWLNYLRPNLKHGGFTDEEDYIICSLYITIGSRWSIIASQLPGRTDNDIKNYWNTRLKKKLLSKQGKAFHQQLNVKFERGTTSSSSSQNQIQIFHDENTKSNQTLYNQVVDPSMRAFAMEEQSMIKNQILEPFSWEPNKVLFDVDYDAAASSYHHHASPSLNSMSSTSSIGTNNSSLQMSHYTVNHNDHDQPDMFFMDGFENFQAELFDEIANNNTVENGFDGTEILINNNYLDHDISSFIDYPLYDNE.

2 consecutive HTH myb-type domains span residues 9–66 and 67–117; these read KMAV…RPNL and KHGG…KKKL. 2 consecutive DNA-binding regions (H-T-H motif) follow at residues 38–62 and 90–113; these read WISL…LNYL and WSII…NTRL.

Expressed in roots, leaves, internodes, shoot tips and flowers.

It is found in the nucleus. Transcription factor that functions as a regulator of genes affecting cell wall organization and remodeling. Activates genes related to the primary cell wall and represses genes related to the secondary cell wall and expansins. Required for the regulation of longitudinal cell growth in stems, leaves, petioles, roots, flowers and siliques. The chain is Transcription factor MYB87 from Arabidopsis thaliana (Mouse-ear cress).